Reading from the N-terminus, the 350-residue chain is N-acetyl-gamma-glutamyl-phosphate reductase (350 aa).

The active site involves C153.

The protein belongs to the NAGSA dehydrogenase family. Type 1 subfamily.

The protein resides in the cytoplasm. The enzyme catalyses N-acetyl-L-glutamate 5-semialdehyde + phosphate + NADP(+) = N-acetyl-L-glutamyl 5-phosphate + NADPH + H(+). It participates in amino-acid biosynthesis; L-arginine biosynthesis; N(2)-acetyl-L-ornithine from L-glutamate: step 3/4. In terms of biological role, catalyzes the NADPH-dependent reduction of N-acetyl-5-glutamyl phosphate to yield N-acetyl-L-glutamate 5-semialdehyde. The chain is N-acetyl-gamma-glutamyl-phosphate reductase from Gloeobacter violaceus (strain ATCC 29082 / PCC 7421).